Consider the following 143-residue polypeptide: Transcriptional regulator MraZ (143 aa).

SpoVT-AbrB domains are found at residues 5 to 47 and 76 to 119; these read EYKH…SLKE and ACEC…SEEN.

This sequence belongs to the MraZ family. Forms oligomers.

It is found in the cytoplasm. The protein resides in the nucleoid. This is Transcriptional regulator MraZ from Caldicellulosiruptor saccharolyticus (strain ATCC 43494 / DSM 8903 / Tp8T 6331).